The chain runs to 948 residues: Bifunctional glutamine synthetase adenylyltransferase/adenylyl-removing enzyme (948 aa).

Residues 1–445 (MAPPPDTSGS…IFTEVIAEPP (445 aa)) are adenylyl removase. The interval 451–948 (EPLLDGGEAE…WKQIIEAPVF (498 aa)) is adenylyl transferase.

The protein belongs to the GlnE family. Mg(2+) serves as cofactor.

The catalysed reaction is [glutamine synthetase]-O(4)-(5'-adenylyl)-L-tyrosine + phosphate = [glutamine synthetase]-L-tyrosine + ADP. It catalyses the reaction [glutamine synthetase]-L-tyrosine + ATP = [glutamine synthetase]-O(4)-(5'-adenylyl)-L-tyrosine + diphosphate. Its function is as follows. Involved in the regulation of glutamine synthetase GlnA, a key enzyme in the process to assimilate ammonia. When cellular nitrogen levels are high, the C-terminal adenylyl transferase (AT) inactivates GlnA by covalent transfer of an adenylyl group from ATP to specific tyrosine residue of GlnA, thus reducing its activity. Conversely, when nitrogen levels are low, the N-terminal adenylyl removase (AR) activates GlnA by removing the adenylyl group by phosphorolysis, increasing its activity. The regulatory region of GlnE binds the signal transduction protein PII (GlnB) which indicates the nitrogen status of the cell. The polypeptide is Bifunctional glutamine synthetase adenylyltransferase/adenylyl-removing enzyme (Methylococcus capsulatus (strain ATCC 33009 / NCIMB 11132 / Bath)).